The sequence spans 402 residues: Mannonate dehydratase (402 aa).

It belongs to the mannonate dehydratase family. It depends on Fe(2+) as a cofactor. Requires Mn(2+) as cofactor.

It catalyses the reaction D-mannonate = 2-dehydro-3-deoxy-D-gluconate + H2O. The protein operates within carbohydrate metabolism; pentose and glucuronate interconversion. Functionally, catalyzes the dehydration of D-mannonate. The chain is Mannonate dehydratase from Rhizobium meliloti (strain 1021) (Ensifer meliloti).